The sequence spans 235 residues: Large ribosomal subunit protein uL1 (235 aa).

This sequence belongs to the universal ribosomal protein uL1 family. As to quaternary structure, part of the 50S ribosomal subunit.

Binds directly to 23S rRNA. The L1 stalk is quite mobile in the ribosome, and is involved in E site tRNA release. Functionally, protein L1 is also a translational repressor protein, it controls the translation of the L11 operon by binding to its mRNA. This is Large ribosomal subunit protein uL1 from Solidesulfovibrio magneticus (strain ATCC 700980 / DSM 13731 / RS-1) (Desulfovibrio magneticus).